The primary structure comprises 218 residues: Small ribosomal subunit protein uS3c (218 aa).

One can recognise a KH type-2 domain in the interval 43 to 118 (IKNYVQKNTK…KFNIAITKIA (76 aa)).

This sequence belongs to the universal ribosomal protein uS3 family. Part of the 30S ribosomal subunit.

It localises to the plastid. The protein resides in the chloroplast. The chain is Small ribosomal subunit protein uS3c (rps3) from Coffea arabica (Arabian coffee).